The chain runs to 475 residues: Ribosomal protein uS12 methylthiotransferase RimO (475 aa).

The region spanning 36–150 (NKINFISLGC…ILKAVQSTQK (115 aa)) is the MTTase N-terminal domain. Residues cysteine 45, cysteine 81, cysteine 113, cysteine 185, cysteine 189, and cysteine 192 each contribute to the [4Fe-4S] cluster site. Positions 171–403 (STPKHYAYLK…MQVQKKVVKK (233 aa)) constitute a Radical SAM core domain. The 70-residue stretch at 406-475 (KKMIGKKIAV…ADYDLVGHVI (70 aa)) folds into the TRAM domain.

Belongs to the methylthiotransferase family. RimO subfamily. The cofactor is [4Fe-4S] cluster.

Its subcellular location is the cytoplasm. The catalysed reaction is L-aspartate(89)-[ribosomal protein uS12]-hydrogen + (sulfur carrier)-SH + AH2 + 2 S-adenosyl-L-methionine = 3-methylsulfanyl-L-aspartate(89)-[ribosomal protein uS12]-hydrogen + (sulfur carrier)-H + 5'-deoxyadenosine + L-methionine + A + S-adenosyl-L-homocysteine + 2 H(+). Its function is as follows. Catalyzes the methylthiolation of an aspartic acid residue of ribosomal protein uS12. The protein is Ribosomal protein uS12 methylthiotransferase RimO of Protochlamydia amoebophila (strain UWE25).